A 212-amino-acid polypeptide reads, in one-letter code: 2-hydroxychromene-2-carboxylate isomerase (212 aa).

Residue Ser-24 is the Nucleophile of the active site. Residue Ser-24 coordinates glutathione. Residues Lys-56, 66-67 (NR), and Tyr-97 contribute to the substrate site. Glutathione contacts are provided by residues Val-181 and 192 to 195 (WGND).

The protein belongs to the GST superfamily. NadH family. Glutathione serves as cofactor.

It carries out the reaction 2-hydroxychromene-2-carboxylate = (3E)-4-(2-hydroxyphenyl)-2-oxobut-3-enoate. It functions in the pathway aromatic compound metabolism; naphthalene degradation. In terms of biological role, involved in the naphthalene catabolic pathway. Catalyzes the reversible glutathione-dependent isomerization of 2-hydroxychromene-2-carboxylate (HCCA) to trans-O-hydroxybenzylidenepyruvate (THBPA). This is 2-hydroxychromene-2-carboxylate isomerase (doxJ) from Pseudomonas sp. (strain C18).